The following is a 319-amino-acid chain: Beta-ketoacyl-[acyl-carrier-protein] synthase III (319 aa).

Residues Cys-112 and His-246 contribute to the active site. Residues 247-251 (QANFR) form an ACP-binding region. The active site involves Asn-276.

This sequence belongs to the thiolase-like superfamily. FabH family. Homodimer.

The protein localises to the cytoplasm. The catalysed reaction is malonyl-[ACP] + acetyl-CoA + H(+) = 3-oxobutanoyl-[ACP] + CO2 + CoA. It participates in lipid metabolism; fatty acid biosynthesis. Functionally, catalyzes the condensation reaction of fatty acid synthesis by the addition to an acyl acceptor of two carbons from malonyl-ACP. Catalyzes the first condensation reaction which initiates fatty acid synthesis and may therefore play a role in governing the total rate of fatty acid production. Possesses both acetoacetyl-ACP synthase and acetyl transacylase activities. Its substrate specificity determines the biosynthesis of branched-chain and/or straight-chain of fatty acids. The protein is Beta-ketoacyl-[acyl-carrier-protein] synthase III of Pseudoalteromonas atlantica (strain T6c / ATCC BAA-1087).